A 531-amino-acid polypeptide reads, in one-letter code: Squalene epoxidase 1 (531 aa).

A helical membrane pass occupies residues 9 to 29; the sequence is ILPLLISSLLISFVAFYGFFV. FAD is bound by residues 70–71, 90–91, Arg-98, Arg-169, Val-185, Asp-347, and Met-360; these read VA and ER. 2 consecutive transmembrane segments (helical) span residues 458–478 and 483–503; these read LVCHFFAVAVYGVIRLLIPFP and IWLGAKLISGASGIIFPIIKA.

This sequence belongs to the squalene monooxygenase family. It depends on FAD as a cofactor. As to expression, expressed in seedlings, leaves, stems, inflorescences, sepals, style and siliques. Expressed in expanded cotyledons, root tips and cortical cells of the root elongation zone, but not in root hair cells. In leaves, expressed in most cells, with a very strong expression in stomata.

Its subcellular location is the membrane. It carries out the reaction squalene + reduced [NADPH--hemoprotein reductase] + O2 = (S)-2,3-epoxysqualene + oxidized [NADPH--hemoprotein reductase] + H2O + H(+). Its pathway is terpene metabolism; lanosterol biosynthesis; lanosterol from farnesyl diphosphate: step 2/3. Catalyzes the stereospecific oxidation of squalene to (S)-2,3-epoxysqualene, and is considered to be a rate-limiting enzyme in steroid biosynthesis. Can produce not only oxidosqualene, but also 2,3:22,23-dioxidosqualene. Main squalene epoxidase in the root. Sqe1 mutants may show defects in membrane lipid rafts, impairing the correct localization of RHD2 NADPH oxidase and the proper polarized production of ROS. This is Squalene epoxidase 1 (SQE1) from Arabidopsis thaliana (Mouse-ear cress).